Consider the following 361-residue polypeptide: Free fatty acid receptor 4 (361 aa).

The Extracellular portion of the chain corresponds to M1–T45. N21 carries N-linked (GlcNAc...) asparagine glycosylation. Residues V46–A66 traverse the membrane as a helical segment. At R67 to L77 the chain is on the cytoplasmic side. Residues V78–V98 traverse the membrane as a helical segment. Residues R99 to H112 lie on the Extracellular side of the membrane. The cysteines at positions 111 and 194 are disulfide-linked. Residues L113–S133 form a helical membrane-spanning segment. Over L134–A156 the chain is Cytoplasmic. Residues V157–F177 traverse the membrane as a helical segment. Over R178–E204 the chain is Extracellular. Residues I205 to I225 form a helical membrane-spanning segment. Over S226 to L268 the chain is Cytoplasmic. The helical transmembrane segment at L269 to I289 threads the bilayer. Residues Q290–D295 are Extracellular-facing. Residues L296 to L316 traverse the membrane as a helical segment. The Cytoplasmic portion of the chain corresponds to N317–G361. Phosphothreonine occurs at positions 347 and 349. 3 positions are modified to phosphoserine: S350, S357, and S360.

This sequence belongs to the G-protein coupled receptor 1 family. In terms of assembly, interacts (via C-terminus) with ARRB2 following LCFAs stimulation. Phosphorylated at two clusters of Ser and Thr residues located in the intracellular C-terminus, a prerequisite for FFAR4 internalization via an ARRB2-dependent pathway. In terms of tissue distribution, the predominant isoform in human tissues. Expressed in adipose tissue, pancreatic islets, lung and brain. Expressed in alpha cells of pancreatic islets. Expressed in primary cilia of perivascular preadipocytes of white adipose tissue (at protein level). Abundant expression in the intestinal tract. Expressed in colonic intraepithelial neuroendocrine cells.

Its subcellular location is the cell membrane. The protein localises to the endosome membrane. It localises to the lysosome membrane. It is found in the cell projection. The protein resides in the cilium membrane. Its function is as follows. G-protein-coupled receptor for long-chain fatty acids (LCFAs) with a major role in adipogenesis, energy metabolism and inflammation. Signals via G-protein and beta-arrestin pathways. LCFAs sensing initiates activation of phosphoinositidase C-linked G proteins GNAQ and GNA11 (G(q)/G(11)), inducing a variety of cellular responses via second messenger pathways such as intracellular calcium mobilization, modulation of cyclic adenosine monophosphate (cAMP) production, and mitogen-activated protein kinases (MAPKs). After LCFAs binding, associates with beta-arrestin ARRB2 that acts as an adapter protein coupling the receptor to specific downstream signaling pathways, as well as mediating receptor endocytosis. In response to dietary fats, plays an important role in the regulation of adipocyte proliferation and differentiation. Acts as a receptor for omega-3 polyunsaturated fatty acids (PUFAs) at primary cilium of perivascular preadipocytes, initiating an adipogenic program via cAMP and CTCF-dependent chromatin remodeling that ultimately results in transcriptional activation of adipogenic genes and cell cycle entry. Induces differentiation of brown adipocytes probably via autocrine and endocrine functions of FGF21 hormone. Activates brown adipocytes by initiating intracellular calcium signaling that leads to mitochondrial depolarization and fission, and overall increased mitochondrial respiration. Consequently stimulates fatty acid uptake and oxidation in mitochondria together with UCP1-mediated thermogenic respiration, eventually reducing fat mass. Regulates bi-potential differentiation of bone marrow mesenchymal stem cells toward osteoblasts or adipocytes likely by up-regulating distinct integrins. In response to dietary fats regulates hormone secretion and appetite. Stimulates GIP and GLP1 secretion from enteroendocrine cells as well as GCG secretion in pancreatic alpha cells, thereby playing a role in the regulation of blood glucose levels. Negatively regulates glucose-induced SST secretion in pancreatic delta cells. Mediates LCFAs inhibition of GHRL secretion, an appetite-controlling hormone. In taste buds, contributes to sensing of dietary fatty acids by the gustatory system. During the inflammatory response, promotes anti-inflammatory M2 macrophage differentiation in adipose tissue. Mediates the anti-inflammatory effects of omega-3 PUFAs via inhibition of NLRP3 inflammasome activation. In this pathway, interacts with adapter protein ARRB2 and inhibits the priming step triggered by Toll-like receptors (TLRs) at the level of TAK1 and TAB1. Further inhibits the activation step when ARRB2 directly associates with NLRP3, leading to inhibition of pro-inflammatory cytokine release. Mediates LCFAs anti-apoptotic effects. Receptor for LCFAs decoupled from G-protein signaling. May signal through beta-arrestin pathway. After LCFAs binding, associates with beta-arrestin ARRB2 that may act as an adapter protein coupling the receptor to specific downstream signaling pathways, as well as mediating receptor endocytosis. The protein is Free fatty acid receptor 4 of Homo sapiens (Human).